The following is a 373-amino-acid chain: T-protein (373 aa).

The Chorismate mutase domain occupies 1 to 90; sequence MVAELTALRD…ESYTSENDKG (90 aa). The Prephenate/arogenate dehydrogenase domain occupies 99–361; sequence RPVVIVGGKG…DHAKRFLVES (263 aa).

It in the C-terminal section; belongs to the prephenate/arogenate dehydrogenase family.

Its subcellular location is the cytoplasm. The catalysed reaction is chorismate = prephenate. It carries out the reaction prephenate + NAD(+) = 3-(4-hydroxyphenyl)pyruvate + CO2 + NADH. It functions in the pathway amino-acid biosynthesis; L-tyrosine biosynthesis; (4-hydroxyphenyl)pyruvate from prephenate (NAD(+) route): step 1/1. Its pathway is metabolic intermediate biosynthesis; prephenate biosynthesis; prephenate from chorismate: step 1/1. The polypeptide is T-protein (tyrA) (Enterobacter agglomerans (Erwinia herbicola)).